Reading from the N-terminus, the 192-residue chain is Peptidyl-tRNA hydrolase (192 aa).

Tyr14 is a tRNA binding site. Residue His19 is the Proton acceptor of the active site. Residues Tyr64, Asn66, and Asn112 each coordinate tRNA.

It belongs to the PTH family. In terms of assembly, monomer.

It localises to the cytoplasm. The catalysed reaction is an N-acyl-L-alpha-aminoacyl-tRNA + H2O = an N-acyl-L-amino acid + a tRNA + H(+). In terms of biological role, hydrolyzes ribosome-free peptidyl-tRNAs (with 1 or more amino acids incorporated), which drop off the ribosome during protein synthesis, or as a result of ribosome stalling. Its function is as follows. Catalyzes the release of premature peptidyl moieties from peptidyl-tRNA molecules trapped in stalled 50S ribosomal subunits, and thus maintains levels of free tRNAs and 50S ribosomes. The chain is Peptidyl-tRNA hydrolase from Prosthecochloris aestuarii (strain DSM 271 / SK 413).